Here is a 484-residue protein sequence, read N- to C-terminus: Putative sodium/proton-dependent alanine carrier protein YrbD (484 aa).

11 helical membrane passes run Val-11–Met-31, Ala-66–Pro-88, Phe-92–Ile-114, Trp-139–Val-159, Phe-172–Phe-192, Ile-205–Val-225, Ser-238–Val-258, Ala-292–Phe-312, Gly-350–Ala-370, Trp-390–Thr-410, and Ala-416–Leu-436.

The protein belongs to the alanine or glycine:cation symporter (AGCS) (TC 2.A.25) family.

The protein localises to the cell membrane. This Bacillus subtilis (strain 168) protein is Putative sodium/proton-dependent alanine carrier protein YrbD (yrbD).